Consider the following 69-residue polypeptide: Toxin Tma2 (69 aa).

The LCN-type CS-alpha/beta domain occupies lysine 2 to asparagine 66. Disulfide bonds link cysteine 14-cysteine 65, cysteine 18-cysteine 41, cysteine 27-cysteine 48, and cysteine 31-cysteine 50.

It belongs to the long (4 C-C) scorpion toxin superfamily. Sodium channel inhibitor family. Expressed by the venom gland.

The protein localises to the secreted. In terms of biological role, inhibits voltage-gated sodium channels (Nav). This toxin shows insect lethality against crickets. The protein is Toxin Tma2 of Tityus macrochirus (Scorpion).